The sequence spans 198 residues: Ribonuclease HII (198 aa).

Residues 10–198 (HLVAGVDEVG…PVKRALGLAS (189 aa)) form the RNase H type-2 domain. Residues Asp16, Glu17, and Asp108 each coordinate a divalent metal cation.

Belongs to the RNase HII family. The cofactor is Mn(2+). Requires Mg(2+) as cofactor.

It localises to the cytoplasm. The enzyme catalyses Endonucleolytic cleavage to 5'-phosphomonoester.. Functionally, endonuclease that specifically degrades the RNA of RNA-DNA hybrids. This Escherichia coli (strain ATCC 8739 / DSM 1576 / NBRC 3972 / NCIMB 8545 / WDCM 00012 / Crooks) protein is Ribonuclease HII.